A 208-amino-acid polypeptide reads, in one-letter code: Small ribosomal subunit protein uS4 (208 aa).

In terms of domain architecture, S4 RNA-binding spans 98–160; the sequence is QRLDNVVYRM…SKNNSQIVRA (63 aa).

This sequence belongs to the universal ribosomal protein uS4 family. As to quaternary structure, part of the 30S ribosomal subunit. Contacts protein S5. The interaction surface between S4 and S5 is involved in control of translational fidelity.

Its function is as follows. One of the primary rRNA binding proteins, it binds directly to 16S rRNA where it nucleates assembly of the body of the 30S subunit. Functionally, with S5 and S12 plays an important role in translational accuracy. In Sulfurimonas denitrificans (strain ATCC 33889 / DSM 1251) (Thiomicrospira denitrificans (strain ATCC 33889 / DSM 1251)), this protein is Small ribosomal subunit protein uS4.